Consider the following 432-residue polypeptide: D-amino acid dehydrogenase (432 aa).

3–17 is a binding site for FAD; that stretch reads VVILGSGVVGVTSAW.

It belongs to the DadA oxidoreductase family. FAD serves as cofactor.

The catalysed reaction is a D-alpha-amino acid + A + H2O = a 2-oxocarboxylate + AH2 + NH4(+). The protein operates within amino-acid degradation; D-alanine degradation; NH(3) and pyruvate from D-alanine: step 1/1. Its function is as follows. Oxidative deamination of D-amino acids. This is D-amino acid dehydrogenase from Salmonella arizonae (strain ATCC BAA-731 / CDC346-86 / RSK2980).